Here is a 129-residue protein sequence, read N- to C-terminus: Glycine cleavage system H protein (129 aa).

In terms of domain architecture, Lipoyl-binding spans 24–106 (LVRVGISAFA…HGEGWLLVLR (83 aa)). K65 bears the N6-lipoyllysine mark.

This sequence belongs to the GcvH family. The glycine cleavage system is composed of four proteins: P, T, L and H. (R)-lipoate is required as a cofactor.

In terms of biological role, the glycine cleavage system catalyzes the degradation of glycine. The H protein shuttles the methylamine group of glycine from the P protein to the T protein. In Synechococcus sp. (strain CC9605), this protein is Glycine cleavage system H protein.